The primary structure comprises 512 residues: Metal transporter Nramp4 (512 aa).

Helical transmembrane passes span 52–72, 80–100, 129–149, 161–181, 189–209, 235–255, 277–297, 323–343, 371–391, 402–422, 440–460, and 468–488; these read LWLF…PGNL, AIAG…GLLI, MVLW…EVIG, LVPL…FLFL, LEAV…WMFG, AVGI…SALV, IEST…TTVF, YGGG…AAGQ, ALIT…VFDS, WLNV…LCLV, ISWI…VDFF, and ILLV…LYLI.

It belongs to the NRAMP (TC 2.A.55) family. In terms of tissue distribution, expressed in vascular tissues.

The protein localises to the vacuole membrane. In terms of biological role, vacuolar metal transporter involved in intracellular metal homeostasis. Can transport iron (Fe), manganese (Mn) and cadmium (Cd). Regulates metal accumulation under Fe starvation. Acts redundantly with NRAMP3 to mobilize vacuolar Fe and provide sufficient Fe during seed germination. In association with NRAMP3, required for optimal growth and photosynthesis under Mn deficiency. Exports Mn from vacuoles in leaf mesophyll cells, making Mn available for functional photosystem II in chloroplasts. The sequence is that of Metal transporter Nramp4 (NRAMP4) from Arabidopsis thaliana (Mouse-ear cress).